Consider the following 102-residue polypeptide: NADH-quinone oxidoreductase subunit K (102 aa).

3 helical membrane-spanning segments follow: residues 6–26 (LIAM…GVLA), 30–50 (IMFQ…GFVA), and 63–83 (MFIL…ALFL).

The protein belongs to the complex I subunit 4L family. NDH-1 is composed of 14 different subunits. Subunits NuoA, H, J, K, L, M, N constitute the membrane sector of the complex.

The protein resides in the cell inner membrane. The catalysed reaction is a quinone + NADH + 5 H(+)(in) = a quinol + NAD(+) + 4 H(+)(out). Functionally, NDH-1 shuttles electrons from NADH, via FMN and iron-sulfur (Fe-S) centers, to quinones in the respiratory chain. The immediate electron acceptor for the enzyme in this species is believed to be ubiquinone. Couples the redox reaction to proton translocation (for every two electrons transferred, four hydrogen ions are translocated across the cytoplasmic membrane), and thus conserves the redox energy in a proton gradient. The chain is NADH-quinone oxidoreductase subunit K from Rhodopseudomonas palustris (strain BisB5).